The chain runs to 539 residues: MGASTRFRRQSGKVPYNSTAASVIIARFPHRITFGCPRPRGNENGMFDDKIGDLGVTFDDVLLQPRYSEVVPSEVDVSSQMTQRIRLQIPLISSPMDTVTESEMAIALAKEGGLGIVHKNLSVRRQTEEVLKVKRSANGIIVNPVTLNPAQKVSAAAELMDRANVSGIPIVEDDRTLAGILTRRDLRFLEDPDMPISQVMTRENLVTAVGNVTLAQAEKILTEKRVEKLLLIDEERKLTGLITIRDIDMMKRYPRACKDPQGRLRVGAAIGVGDYERAESLIGKGVDVLVVDSAHGHSRNVIETVREIKQNKSWDIDVVAGNVATAEGAADLIAAGADAVKVGIGPGSICTTRVISGIGVPQVTAILSAVKVAQEKNIPVIADGGIRFSGDITKAIAAGASTVMIGSLFAGLAESPGKMILYQGRTFKAYRGMGSMGAMVKGSSDRYRQKGTEAGKLVPEGVEGRVPFKGPLSDYAYQLVGGLRAGMGYVGTRTIEELRRDAKFIRVSAATVRENHPHDIAITQEAPNYSPDVHSGDAG.

CBS domains are found at residues 140–196 (IIVN…DMPI) and 200–257 (MTRE…PRAC). NAD(+) contacts are provided by residues aspartate 292 and 343 to 345 (GIG). Residues glycine 345 and glycine 347 each contribute to the K(+) site. Position 348 (serine 348) interacts with IMP. Residue cysteine 350 coordinates K(+). Cysteine 350 serves as the catalytic Thioimidate intermediate. Residues 383-385 (DGG), 406-407 (GS), and 430-434 (YRGMG) contribute to the IMP site. The active-site Proton acceptor is the arginine 446. Residue glutamate 460 coordinates IMP. Residues glutamate 514 and histidine 516 each coordinate K(+). Positions 517–539 (PHDIAITQEAPNYSPDVHSGDAG) are disordered.

This sequence belongs to the IMPDH/GMPR family. As to quaternary structure, homotetramer. K(+) is required as a cofactor.

It catalyses the reaction IMP + NAD(+) + H2O = XMP + NADH + H(+). It participates in purine metabolism; XMP biosynthesis via de novo pathway; XMP from IMP: step 1/1. Mycophenolic acid (MPA) is a non-competitive inhibitor that prevents formation of the closed enzyme conformation by binding to the same site as the amobile flap. In contrast, mizoribine monophosphate (MZP) is a competitive inhibitor that induces the closed conformation. MPA is a potent inhibitor of mammalian IMPDHs but a poor inhibitor of the bacterial enzymes. MZP is a more potent inhibitor of bacterial IMPDH. Its function is as follows. Catalyzes the conversion of inosine 5'-phosphate (IMP) to xanthosine 5'-phosphate (XMP), the first committed and rate-limiting step in the de novo synthesis of guanine nucleotides, and therefore plays an important role in the regulation of cell growth. The protein is Inosine-5'-monophosphate dehydrogenase of Rhodopirellula baltica (strain DSM 10527 / NCIMB 13988 / SH1).